A 507-amino-acid polypeptide reads, in one-letter code: Protein DETOXIFICATION 41 (507 aa).

Topologically, residues 1 to 62 (MSSTETYEPL…KLLWTLSGAS (62 aa)) are cytoplasmic. Residues 63–83 (IVVSVLNYMLSFVTVMFTGHL) traverse the membrane as a helical segment. Topologically, residues 84-92 (GSLQLAGAS) are vacuolar. A helical membrane pass occupies residues 93–113 (IATVGIQGLAYGIMLGMASAV). The Cytoplasmic segment spans residues 114-137 (QTVCGQAYGARQYSSMGIICQRAM). Residues 138–158 (VLHLAAAVFLTFLYWYSGPIL) traverse the membrane as a helical segment. Residues 159 to 170 (KTMGQSVAIAHE) lie on the Vacuolar side of the membrane. The chain crosses the membrane as a helical span at residues 171–191 (GQIFARGMIPQIYAFALACPM). The Cytoplasmic segment spans residues 192-202 (QRFLQAQNIVN). The chain crosses the membrane as a helical span at residues 203-223 (PLAYMSLGVFLLHTLLTWLVT). Position 224 (asparagine 224) is a topological domain, vacuolar. A helical transmembrane segment spans residues 225 to 245 (VLDFGLLGAALILSFSWWLLV). At 246–283 (AVNGMYILMSPNCKETWTGFSTRAFRGIWPYFKLTVAS) the chain is on the cytoplasmic side. Residues 284-304 (AVMLCLEIWYNQGLVIISGLL) form a helical membrane-spanning segment. At 305–312 (SNPTISLD) the chain is on the vacuolar side. The chain crosses the membrane as a helical span at residues 313–333 (AISICMYYLNWDMQFMLGLSA). At 334-355 (AISVRVSNELGAGNPRVAMLSV) the chain is on the cytoplasmic side. The helical transmembrane segment at 356–376 (VVVNITTVLISSVLCVIVLVF) threads the bilayer. The Vacuolar portion of the chain corresponds to 377–389 (RVGLSKAFTSDAE). A helical transmembrane segment spans residues 390–410 (VIAAVSDLFPLLAVSIFLNGI). Over 411 to 425 (QPILSGVAIGSGWQA) the chain is Cytoplasmic. A helical transmembrane segment spans residues 426 to 446 (VVAYVNLVTYYVIGLPIGCVL). Topologically, residues 447-453 (GFKTSLG) are vacuolar. Residues 454–474 (VAGIWWGMIAGVILQTLTLIV) traverse the membrane as a helical segment. Over 475–507 (LTLKTNWTSEVENAAQRVKTSATENQEMANAGV) the chain is Cytoplasmic.

This sequence belongs to the multi antimicrobial extrusion (MATE) (TC 2.A.66.1) family. Expressed in reproductive tissues, from buds to siliques. Restricted to the endothelium layer of the ovule and the seed coat.

The protein localises to the vacuole membrane. Its pathway is secondary metabolite biosynthesis; flavonoid biosynthesis. Functionally, acts as a flavonoid/H(+)-antiporter that control the vacuolar sequestration of flavonoids in the seed coat endothelium. Could transport the anthocyanin cyanidin-3-O-glucoside and epicatechin 3'-O-glucoside in vitro. The sequence is that of Protein DETOXIFICATION 41 from Arabidopsis thaliana (Mouse-ear cress).